We begin with the raw amino-acid sequence, 206 residues long: Large ribosomal subunit protein uL4 (206 aa).

The segment at 48–97 (THAVKNRSLVSGGGKKPWKQKHTGRARQGSTRASQWVGGGKAMGPKPRDY) is disordered. The segment covering 63–72 (KPWKQKHTGR) has biased composition (basic residues).

It belongs to the universal ribosomal protein uL4 family. In terms of assembly, part of the 50S ribosomal subunit.

Its function is as follows. One of the primary rRNA binding proteins, this protein initially binds near the 5'-end of the 23S rRNA. It is important during the early stages of 50S assembly. It makes multiple contacts with different domains of the 23S rRNA in the assembled 50S subunit and ribosome. In terms of biological role, forms part of the polypeptide exit tunnel. This Anaeromyxobacter sp. (strain K) protein is Large ribosomal subunit protein uL4.